The following is a 400-amino-acid chain: Inosine-5'-monophosphate dehydrogenase (400 aa).

A compositionally biased stretch (basic and acidic residues) spans 96–116 (KNESTPDQNLDKESTDGKDTK). Positions 96 to 125 (KNESTPDQNLDKESTDGKDTKSNNNIDAYS) are disordered. Residues aspartate 163 and 212–214 (GIG) contribute to the NAD(+) site. Residues glycine 214 and glycine 216 each coordinate K(+). Serine 217 is an IMP binding site. Cysteine 219 contributes to the K(+) binding site. The active-site Thioimidate intermediate is the cysteine 219. IMP is bound by residues 252-254 (DGG), 275-276 (GS), and 299-303 (YRGMG). The Proton acceptor role is filled by arginine 315. Residue glutamate 329 participates in IMP binding. Glutamate 383, serine 384, and histidine 385 together coordinate K(+).

Belongs to the IMPDH/GMPR family. Homotetramer. K(+) is required as a cofactor.

It is found in the cytoplasm. The catalysed reaction is IMP + NAD(+) + H2O = XMP + NADH + H(+). Its pathway is purine metabolism; XMP biosynthesis via de novo pathway; XMP from IMP: step 1/1. Mycophenolic acid (MPA) is a non-competitive inhibitor that prevents formation of the closed enzyme conformation by binding to the same site as the amobile flap. In contrast, mizoribine monophosphate (MZP) is a competitive inhibitor that induces the closed conformation. MPA is a potent inhibitor of mammalian IMPDHs but a poor inhibitor of the bacterial enzymes. MZP is a more potent inhibitor of bacterial IMPDH. Resistant to mycophenolic acid (MPA) inhibition. Catalyzes the conversion of inosine 5'-phosphate (IMP) to xanthosine 5'-phosphate (XMP), the first committed and rate-limiting step in the de novo synthesis of guanine nucleotides, and therefore plays an important role in the regulation of cell growth. The protein is Inosine-5'-monophosphate dehydrogenase of Cryptosporidium parvum.